The primary structure comprises 180 residues: Sec-independent protein translocase protein TatB (180 aa).

The helical transmembrane segment at 1-21 (MFDIGWSELLVIGVVALIAIG) threads the bilayer. The segment at 95–180 (IEGVDKPVES…AERLKDAKAS (86 aa)) is disordered. The segment covering 103-123 (ESQPAASAAPETSATVEAPAT) has biased composition (low complexity). The segment covering 170–180 (EAERLKDAKAS) has biased composition (basic and acidic residues).

Belongs to the TatB family. The Tat system comprises two distinct complexes: a TatABC complex, containing multiple copies of TatA, TatB and TatC subunits, and a separate TatA complex, containing only TatA subunits. Substrates initially bind to the TatABC complex, which probably triggers association of the separate TatA complex to form the active translocon.

Its subcellular location is the cell inner membrane. In terms of biological role, part of the twin-arginine translocation (Tat) system that transports large folded proteins containing a characteristic twin-arginine motif in their signal peptide across membranes. Together with TatC, TatB is part of a receptor directly interacting with Tat signal peptides. TatB may form an oligomeric binding site that transiently accommodates folded Tat precursor proteins before their translocation. This chain is Sec-independent protein translocase protein TatB, found in Bradyrhizobium sp. (strain BTAi1 / ATCC BAA-1182).